Here is a 484-residue protein sequence, read N- to C-terminus: Probable glycine dehydrogenase (decarboxylating) subunit 2 (484 aa).

Lysine 264 bears the N6-(pyridoxal phosphate)lysine mark.

It belongs to the GcvP family. C-terminal subunit subfamily. As to quaternary structure, the glycine cleavage system is composed of four proteins: P, T, L and H. In this organism, the P 'protein' is a heterodimer of two subunits. Pyridoxal 5'-phosphate serves as cofactor.

It carries out the reaction N(6)-[(R)-lipoyl]-L-lysyl-[glycine-cleavage complex H protein] + glycine + H(+) = N(6)-[(R)-S(8)-aminomethyldihydrolipoyl]-L-lysyl-[glycine-cleavage complex H protein] + CO2. Functionally, the glycine cleavage system catalyzes the degradation of glycine. The P protein binds the alpha-amino group of glycine through its pyridoxal phosphate cofactor; CO(2) is released and the remaining methylamine moiety is then transferred to the lipoamide cofactor of the H protein. The sequence is that of Probable glycine dehydrogenase (decarboxylating) subunit 2 from Legionella pneumophila subsp. pneumophila (strain Philadelphia 1 / ATCC 33152 / DSM 7513).